We begin with the raw amino-acid sequence, 261 residues long: ATP synthase subunit a (261 aa).

Positions 1–14 (MSTLSFNNISTEVL) are cleaved as a propeptide — removed in mature form. A run of 7 helical transmembrane segments spans residues 38-58 (ITNI…INLL), 96-116 (IYFP…LIGM), 126-146 (HFVV…ILGF), 153-173 (FFSL…LVLI), 191-211 (ANIL…YNIM), 214-234 (GIIF…FSGL), and 235-255 (ELGI…GYIK).

Belongs to the ATPase A chain family. F-type ATPases have 2 components, CF(1) - the catalytic core - and CF(0) - the membrane proton channel. CF(1) has five subunits: alpha(3), beta(3), gamma(1), delta(1), epsilon(1). CF(0) has three main subunits: a, b and c.

The protein localises to the mitochondrion inner membrane. Its function is as follows. Mitochondrial membrane ATP synthase (F(1)F(0) ATP synthase or Complex V) produces ATP from ADP in the presence of a proton gradient across the membrane which is generated by electron transport complexes of the respiratory chain. F-type ATPases consist of two structural domains, F(1) - containing the extramembraneous catalytic core and F(0) - containing the membrane proton channel, linked together by a central stalk and a peripheral stalk. During catalysis, ATP synthesis in the catalytic domain of F(1) is coupled via a rotary mechanism of the central stalk subunits to proton translocation. Key component of the proton channel; it may play a direct role in the translocation of protons across the membrane. This chain is ATP synthase subunit a (atp-6), found in Neurospora crassa (strain ATCC 24698 / 74-OR23-1A / CBS 708.71 / DSM 1257 / FGSC 987).